The following is a 270-amino-acid chain: Glucosamine-6-phosphate deaminase (270 aa).

D68 serves as the catalytic Proton acceptor; for enolization step. D145 acts as the For ring-opening step in catalysis. Catalysis depends on H147, which acts as the Proton acceptor; for ring-opening step. E152 functions as the For ring-opening step in the catalytic mechanism.

The protein belongs to the glucosamine/galactosamine-6-phosphate isomerase family. NagB subfamily.

It catalyses the reaction alpha-D-glucosamine 6-phosphate + H2O = beta-D-fructose 6-phosphate + NH4(+). It functions in the pathway amino-sugar metabolism; N-acetylneuraminate degradation; D-fructose 6-phosphate from N-acetylneuraminate: step 5/5. Its function is as follows. Catalyzes the reversible isomerization-deamination of glucosamine 6-phosphate (GlcN6P) to form fructose 6-phosphate (Fru6P) and ammonium ion. In Bifidobacterium longum subsp. infantis (strain ATCC 15697 / DSM 20088 / JCM 1222 / NCTC 11817 / S12), this protein is Glucosamine-6-phosphate deaminase.